We begin with the raw amino-acid sequence, 557 residues long: Phosphomethylpyrimidine synthase (557 aa).

Substrate-binding positions include N197, M226, Y255, H291, 311–313, 352–355, and E391; these read SRG and DGLR. Zn(2+) is bound at residue H395. Position 418 (Y418) interacts with substrate. Residue H459 coordinates Zn(2+). [4Fe-4S] cluster is bound by residues C539, C542, and C547.

It belongs to the ThiC family. Homodimer. [4Fe-4S] cluster is required as a cofactor.

It carries out the reaction 5-amino-1-(5-phospho-beta-D-ribosyl)imidazole + S-adenosyl-L-methionine = 4-amino-2-methyl-5-(phosphooxymethyl)pyrimidine + CO + 5'-deoxyadenosine + formate + L-methionine + 3 H(+). Its pathway is cofactor biosynthesis; thiamine diphosphate biosynthesis. Its function is as follows. Catalyzes the synthesis of the hydroxymethylpyrimidine phosphate (HMP-P) moiety of thiamine from aminoimidazole ribotide (AIR) in a radical S-adenosyl-L-methionine (SAM)-dependent reaction. The chain is Phosphomethylpyrimidine synthase from Anaplasma phagocytophilum (strain HZ).